The primary structure comprises 103 residues: Large ribosomal subunit protein bL21 (103 aa).

Belongs to the bacterial ribosomal protein bL21 family. As to quaternary structure, part of the 50S ribosomal subunit. Contacts protein L20.

In terms of biological role, this protein binds to 23S rRNA in the presence of protein L20. This chain is Large ribosomal subunit protein bL21, found in Pseudomonas fluorescens (strain Pf0-1).